We begin with the raw amino-acid sequence, 344 residues long: MPVPPLPLHVPAVGWSPDLRALRILDQRLLPGAQEVRDLVQLEEIVEAIRTLAVRGAPAIGVAAAIGLVVALEVDSGGQETRARALLADYAARLQRARPTAVNLGWAIDRLVRTAHRTAVGSMLAALRAEAEAIRAEDVAMCEAIGQHGLAVVPDGARVLTHCNAGALATAGIGTALAPLYMAHARGRALTVYADETRPLRQGARLTAWELSRAGISVSVLPDGAAASLLSQGLVDLVIVGADRIAANGDVANKVGTYGVALAAAAHHVPFYVAAPGSTIDPHTATGRDIVIEHRDADELGELPPGVPAWNPAFDVTPRALIRGYITDRGFVEPPFTLADYAGR.

Residues 55-57 (RGA), Arg-98, and Gln-202 contribute to the substrate site. The active-site Proton donor is the Asp-243. 253–254 (NK) provides a ligand contact to substrate.

This sequence belongs to the eIF-2B alpha/beta/delta subunits family. MtnA subfamily.

The enzyme catalyses 5-(methylsulfanyl)-alpha-D-ribose 1-phosphate = 5-(methylsulfanyl)-D-ribulose 1-phosphate. It functions in the pathway amino-acid biosynthesis; L-methionine biosynthesis via salvage pathway; L-methionine from S-methyl-5-thio-alpha-D-ribose 1-phosphate: step 1/6. Catalyzes the interconversion of methylthioribose-1-phosphate (MTR-1-P) into methylthioribulose-1-phosphate (MTRu-1-P). This Gemmatimonas aurantiaca (strain DSM 14586 / JCM 11422 / NBRC 100505 / T-27) protein is Methylthioribose-1-phosphate isomerase.